The sequence spans 508 residues: Transposase (508 aa).

The region spanning 3–65 (LLSVIRRWHF…PFADRLSAWL (63 aa)) is the HTH IS21-type domain. Residues 124-299 (LAFEPGEAFQ…TIADIWVEEV (176 aa)) enclose the Integrase catalytic domain.

This sequence belongs to the transposase IS21/IS408/IS1162 family.

Required for the transposition of the insertion element. This is Transposase (nmoT) from Aminobacter aminovorans (Chelatobacter heintzii).